We begin with the raw amino-acid sequence, 101 residues long: RNA-binding protein Hfq (101 aa).

One can recognise a Sm domain in the interval 9–68 (DPYLNALRRERIPVSIYLVNGIKLQGQIESFDQFIILLKNTVSQMVYKHAISTVVPARSI). A disordered region spans residues 68 to 91 (ISHNNNGSSQAQAPQQAVQTTQPV). The segment covering 77 to 91 (QAQAPQQAVQTTQPV) has biased composition (low complexity).

The protein belongs to the Hfq family. In terms of assembly, homohexamer.

In terms of biological role, RNA chaperone that binds small regulatory RNA (sRNAs) and mRNAs to facilitate mRNA translational regulation in response to envelope stress, environmental stress and changes in metabolite concentrations. Also binds with high specificity to tRNAs. The protein is RNA-binding protein Hfq of Haemophilus ducreyi (strain 35000HP / ATCC 700724).